A 96-amino-acid polypeptide reads, in one-letter code: Aspartyl/glutamyl-tRNA(Asn/Gln) amidotransferase subunit C (96 aa).

The protein belongs to the GatC family. In terms of assembly, heterotrimer of A, B and C subunits.

It catalyses the reaction L-glutamyl-tRNA(Gln) + L-glutamine + ATP + H2O = L-glutaminyl-tRNA(Gln) + L-glutamate + ADP + phosphate + H(+). The catalysed reaction is L-aspartyl-tRNA(Asn) + L-glutamine + ATP + H2O = L-asparaginyl-tRNA(Asn) + L-glutamate + ADP + phosphate + 2 H(+). In terms of biological role, allows the formation of correctly charged Asn-tRNA(Asn) or Gln-tRNA(Gln) through the transamidation of misacylated Asp-tRNA(Asn) or Glu-tRNA(Gln) in organisms which lack either or both of asparaginyl-tRNA or glutaminyl-tRNA synthetases. The reaction takes place in the presence of glutamine and ATP through an activated phospho-Asp-tRNA(Asn) or phospho-Glu-tRNA(Gln). In Fusobacterium nucleatum subsp. nucleatum (strain ATCC 25586 / DSM 15643 / BCRC 10681 / CIP 101130 / JCM 8532 / KCTC 2640 / LMG 13131 / VPI 4355), this protein is Aspartyl/glutamyl-tRNA(Asn/Gln) amidotransferase subunit C.